The primary structure comprises 123 residues: Fluoride-specific ion channel FluC (123 aa).

4 helical membrane passes run 1–21, 32–52, 64–84, and 99–119; these read MLEI…RYLM, ILSL…GLVI, IGLL…SFSY, and FGYT…GIYL. Na(+)-binding residues include Gly-74 and Thr-77.

This sequence belongs to the fluoride channel Fluc/FEX (TC 1.A.43) family.

Its subcellular location is the cell inner membrane. It catalyses the reaction fluoride(in) = fluoride(out). Na(+) is not transported, but it plays an essential structural role and its presence is essential for fluoride channel function. In terms of biological role, fluoride-specific ion channel. Important for reducing fluoride concentration in the cell, thus reducing its toxicity. This Gloeothece citriformis (strain PCC 7424) (Cyanothece sp. (strain PCC 7424)) protein is Fluoride-specific ion channel FluC.